The chain runs to 1031 residues: Putative glycine dehydrogenase (decarboxylating), mitochondrial (1031 aa).

The N-terminal 49 residues, 1 to 49, are a transit peptide targeting the mitochondrion; the sequence is MFDSFMKRNQLALIMFRACSKLQYHGVNTSLSRHLFLAKRNLSISSACL. The residue at position 783 (lysine 783) is an N6-(pyridoxal phosphate)lysine.

It belongs to the GcvP family. Pyridoxal 5'-phosphate serves as cofactor.

Its subcellular location is the mitochondrion. The catalysed reaction is N(6)-[(R)-lipoyl]-L-lysyl-[glycine-cleavage complex H protein] + glycine + H(+) = N(6)-[(R)-S(8)-aminomethyldihydrolipoyl]-L-lysyl-[glycine-cleavage complex H protein] + CO2. In terms of biological role, the glycine cleavage system catalyzes the degradation of glycine. The P protein binds the alpha-amino group of glycine through its pyridoxal phosphate cofactor; CO(2) is released and the remaining methylamine moiety is then transferred to the lipoamide cofactor of the H protein. The polypeptide is Putative glycine dehydrogenase (decarboxylating), mitochondrial (gcv2) (Schizosaccharomyces pombe (strain 972 / ATCC 24843) (Fission yeast)).